Consider the following 451-residue polypeptide: Probable asparagine--tRNA ligase, cytoplasmic (451 aa).

The protein belongs to the class-II aminoacyl-tRNA synthetase family.

It localises to the cytoplasm. The enzyme catalyses tRNA(Asn) + L-asparagine + ATP = L-asparaginyl-tRNA(Asn) + AMP + diphosphate + H(+). This is Probable asparagine--tRNA ligase, cytoplasmic from Encephalitozoon cuniculi (strain GB-M1) (Microsporidian parasite).